Reading from the N-terminus, the 493-residue chain is F(420)H(2) dehydrogenase subunit N (493 aa).

The next 14 helical transmembrane spans lie at 7–27 (LAPELVLVATGLVILLTGVFL), 34–54 (ILGYLATLGTLAAIFLTVKSF), 78–98 (LSQFFKLVFLAVALIVSIASI), 107–127 (TEEFYTLVLFATFGMMIVASA), 130–150 (LILLFCAFELASLATFALAGF), 165–185 (FVIGSVSAALMLFGLSFVYGA), 205–225 (PIGIVAIVLLTAGFGFKMALV), 244–264 (ALLAAGSKKMGFVAAFRVFII), 273–293 (WQFMFTLLAVVTMTFGNVVAV), 310–330 (AGYIAMAFAVMTPVALAGGIM), 333–353 (LAHAFMKAGAFIAAAAVVWMI), 381–401 (ALCMTVFVFALAGIPPTAGFM), 404–424 (FVLFSSTIQAGMTWLAVIAIL), and 454–474 (IPFPYAAALLVAVAGVLVMGL).

The protein belongs to the complex I subunit 2 family. As to quaternary structure, the FPO complex is composed of at least 13 different subunits. FpoA, FpoH, FpoJ, FpoK, FpoL, FpoM and FpoN proteins constitute the membrane sector of the complex.

Its subcellular location is the cell membrane. The enzyme catalyses methanophenazine + reduced coenzyme F420-(gamma-L-Glu)(n) = dihydromethanophenazine + oxidized coenzyme F420-(gamma-L-Glu)(n) + H(+). Functionally, component of the F(420)H(2) dehydrogenase (FPO complex) which is part of the energy-conserving F(420)H(2):heterodisulfide oxidoreductase system. The membrane-bound electron transfer system of the complex plays an important role in the metabolism of methylotrophic methanogens when the organisms grow on methanol or methylamines. Catalyzes the oxidation of methanophenazine to dihydromethanophenazine. It shuttles electrons from F(420)H(2), via FAD and iron-sulfur (Fe-S) centers, to methanophenazine (an electron carrier in the membrane). It couples the redox reaction to proton translocation (for every two electrons transferred, two hydrogen ions are translocated across the cytoplasmic membrane), and thus conserves the redox energy in a proton gradient. It also catalyzes the oxidation of F(420)H(2) with quinones such as 2,3-dimethyl-1,4-naphthoquinone, 2-methyl-1,4-naphthoquinone and tetramethyl-p-benzoquinone. This Methanosarcina mazei (strain ATCC BAA-159 / DSM 3647 / Goe1 / Go1 / JCM 11833 / OCM 88) (Methanosarcina frisia) protein is F(420)H(2) dehydrogenase subunit N (fpoN).